The chain runs to 1351 residues: Tripartite motif-containing protein 66 (1351 aa).

Residues 105-150 (MARNCSECKEKRAAHILCTYCNRWLCSSCTEEHRHSPVPGGPFFPR) form a B box-type 1; atypical zinc finger. 8 residues coordinate Zn(2+): C109, C112, C133, H139, C169, H172, C192, and H197. A B box-type 2 zinc finger spans residues 164–205 (DFTLYCPLHTQEVLKLFCETCDMLTCHSCLVVEHKEHRCRHV). The stretch at 234-304 (AKQIEDRIFE…IMVLNRQFEH (71 aa)) forms a coiled coil. 3 disordered regions span residues 542–608 (FGHH…CSQN), 663–730 (APVQ…VRKH), and 857–895 (CPLQ…DPSL). Residues 560-588 (QLPPPPPPLPHPPPPLPPPPQQPHPPLPP) show a composition bias toward pro residues. Over residues 664–676 (PVQSQSQEETLQA) the composition is skewed to polar residues. Over residues 872–884 (TGSSSSSGRTSGS) the composition is skewed to low complexity. The PxVxL motif motif lies at 995 to 999 (PYVRL). The segment at 1067–1098 (TSLAGQRPPEVEGTSPEEHRLIPRTPGAKKGP) is disordered. The segment at 1105–1152 (EDFCAVCLNGGELLCCDRCPKVFHLSCHVPALLSFPGGEWVCTLCRSL) adopts a PHD-type zinc-finger fold. One can recognise a Bromo domain in the interval 1176-1282 (GLSMYDQKKC…VFFEGWLKEI (107 aa)). The tract at residues 1289–1351 (AQPRQEDSDS…FRLANSISQV (63 aa)) is disordered.

As to quaternary structure, can form homodimers and heterodimers. Interacts with CBX5, CBX1 and CBX3 via PxVxL motif.

The protein resides in the nucleus. May function as transcription repressor; The repressive effects are mediated, at least in part, by recruitment of deacetylase activity. May play a role as negative regulator of postmeiotic genes acting through CBX3 complex formation and centromere association. The chain is Tripartite motif-containing protein 66 (TRIM66) from Homo sapiens (Human).